The primary structure comprises 392 residues: O-phospho-L-seryl-tRNA:Cys-tRNA synthase 1 (392 aa).

Pyridoxal 5'-phosphate contacts are provided by residues A85–R86, N190, and S213–H215. Position 216 is an N6-(pyridoxal phosphate)lysine (K216).

Belongs to the SepCysS family. As to quaternary structure, homodimer. Interacts with SepRS. The cofactor is pyridoxal 5'-phosphate.

The enzyme catalyses O-phospho-L-seryl-tRNA(Cys) + hydrogen sulfide + H(+) = L-cysteinyl-tRNA(Cys) + phosphate. Its function is as follows. Converts O-phospho-L-seryl-tRNA(Cys) (Sep-tRNA(Cys)) to L-cysteinyl-tRNA(Cys) (Cys-tRNA(Cys)). The sequence is that of O-phospho-L-seryl-tRNA:Cys-tRNA synthase 1 from Methanocorpusculum labreanum (strain ATCC 43576 / DSM 4855 / Z).